The chain runs to 543 residues: Chaperonin GroEL (543 aa).

Residues 29-32 (TLGP), 86-90 (DGTTT), Gly-413, 476-478 (NAA), and Asp-492 each bind ATP.

The protein belongs to the chaperonin (HSP60) family. In terms of assembly, forms a cylinder of 14 subunits composed of two heptameric rings stacked back-to-back. Interacts with the co-chaperonin GroES.

It is found in the cytoplasm. The enzyme catalyses ATP + H2O + a folded polypeptide = ADP + phosphate + an unfolded polypeptide.. In terms of biological role, together with its co-chaperonin GroES, plays an essential role in assisting protein folding. The GroEL-GroES system forms a nano-cage that allows encapsulation of the non-native substrate proteins and provides a physical environment optimized to promote and accelerate protein folding. The polypeptide is Chaperonin GroEL (Streptococcus pyogenes serotype M5 (strain Manfredo)).